Consider the following 328-residue polypeptide: Ubiquitin-conjugating enzyme E2 Z (328 aa).

A UBC core domain is found at 71-225; that stretch reads QCILRIKRDI…IRHETMRVAV (155 aa). C160 acts as the Glycyl thioester intermediate in catalysis. Residues 295–328 are disordered; the sequence is RLREKCPPEDNDGDSDSDTSSSGTDPDSQGSSQP. Positions 312 to 328 are enriched in low complexity; it reads DTSSSGTDPDSQGSSQP.

Belongs to the ubiquitin-conjugating enzyme family.

The protein localises to the cytoplasm. It is found in the nucleus. It carries out the reaction S-ubiquitinyl-[E1 ubiquitin-activating enzyme]-L-cysteine + [E2 ubiquitin-conjugating enzyme]-L-cysteine = [E1 ubiquitin-activating enzyme]-L-cysteine + S-ubiquitinyl-[E2 ubiquitin-conjugating enzyme]-L-cysteine.. The protein operates within protein modification; protein ubiquitination. Catalyzes the covalent attachment of ubiquitin to other proteins. May be involved in apoptosis regulation. The sequence is that of Ubiquitin-conjugating enzyme E2 Z (ube2z) from Danio rerio (Zebrafish).